The primary structure comprises 159 residues: Phosphopantetheine adenylyltransferase (159 aa).

ATP is bound at residue His-16. 3 residues coordinate substrate: Lys-40, Met-72, and Arg-86. ATP is bound by residues 87–89 (GLR), Glu-97, and 122–128 (YQYLSAS).

The protein belongs to the bacterial CoaD family. As to quaternary structure, homohexamer. Mg(2+) is required as a cofactor.

The protein localises to the cytoplasm. It catalyses the reaction (R)-4'-phosphopantetheine + ATP + H(+) = 3'-dephospho-CoA + diphosphate. The protein operates within cofactor biosynthesis; coenzyme A biosynthesis; CoA from (R)-pantothenate: step 4/5. Functionally, reversibly transfers an adenylyl group from ATP to 4'-phosphopantetheine, yielding dephospho-CoA (dPCoA) and pyrophosphate. The chain is Phosphopantetheine adenylyltransferase from Dehalococcoides mccartyi (strain ATCC BAA-2266 / KCTC 15142 / 195) (Dehalococcoides ethenogenes (strain 195)).